Here is a 358-residue protein sequence, read N- to C-terminus: Uptake hydrogenase small subunit (358 aa).

The tat-type signal signal peptide spans 1–45; sequence MSRLETFYDVMRRQGITRRSFLKYCSLTAAALGLGPAFAPRIAHA. [4Fe-4S] cluster is bound by residues C62, C65, C160, C194, H232, C235, C260, and C266. [3Fe-4S] cluster contacts are provided by C275, C294, and C297.

The protein belongs to the [NiFe]/[NiFeSe] hydrogenase small subunit family. Heterodimer of a large and a small subunit. [4Fe-4S] cluster is required as a cofactor. It depends on [3Fe-4S] cluster as a cofactor. In terms of processing, predicted to be exported by the Tat system. The position of the signal peptide cleavage has been experimentally proven.

It is found in the cell membrane. The enzyme catalyses H2 + A = AH2. This enzyme recycles the H(2) produced by nitrogenase to increase the production of ATP and to protect nitrogenase against inhibition or damage by O(2) under carbon- or phosphate-limited conditions. This chain is Uptake hydrogenase small subunit (hoxK), found in Azotobacter vinelandii.